A 187-amino-acid chain; its full sequence is uncharacterized protein (187 aa).

Residues 53–187 (RKPHIYSPAD…CLQTSYVVPG (135 aa)) enclose the Tyr recombinase domain. Catalysis depends on residues Arg98 and Lys123.

The protein belongs to the 'phage' integrase family.

This is an uncharacterized protein from Sinorhizobium fredii (strain NBRC 101917 / NGR234).